A 218-amino-acid polypeptide reads, in one-letter code: UPF0502 protein CJA_1529 (218 aa).

It belongs to the UPF0502 family.

The sequence is that of UPF0502 protein CJA_1529 from Cellvibrio japonicus (strain Ueda107) (Pseudomonas fluorescens subsp. cellulosa).